We begin with the raw amino-acid sequence, 179 residues long: MLMGSIARRYARALFSLAVEQGRVEPWNDALQVLKNAVEGSPDLRDVLSNPVYSKEQRRAIVEKLASALKLEREPANLLFLLGDRNRLAYLAAVVDTFRSLADQHLGRLRARVTSAVPLDASAAQAIADRLSKATNAKVLLDRAVDPSLLGGVIAQVGSLVYDGSVRTQLEDLRKTLKQ.

The protein belongs to the ATPase delta chain family. As to quaternary structure, F-type ATPases have 2 components, F(1) - the catalytic core - and F(0) - the membrane proton channel. F(1) has five subunits: alpha(3), beta(3), gamma(1), delta(1), epsilon(1). F(0) has three main subunits: a(1), b(2) and c(10-14). The alpha and beta chains form an alternating ring which encloses part of the gamma chain. F(1) is attached to F(0) by a central stalk formed by the gamma and epsilon chains, while a peripheral stalk is formed by the delta and b chains.

It is found in the cell inner membrane. F(1)F(0) ATP synthase produces ATP from ADP in the presence of a proton or sodium gradient. F-type ATPases consist of two structural domains, F(1) containing the extramembraneous catalytic core and F(0) containing the membrane proton channel, linked together by a central stalk and a peripheral stalk. During catalysis, ATP synthesis in the catalytic domain of F(1) is coupled via a rotary mechanism of the central stalk subunits to proton translocation. In terms of biological role, this protein is part of the stalk that links CF(0) to CF(1). It either transmits conformational changes from CF(0) to CF(1) or is implicated in proton conduction. This Anaeromyxobacter dehalogenans (strain 2CP-1 / ATCC BAA-258) protein is ATP synthase subunit delta.